A 223-amino-acid chain; its full sequence is Ribose-5-phosphate isomerase A (223 aa).

Residues 32–35, 85–88, and 98–101 each bind substrate; these read TGST, DGAD, and KGGG. Glu-107 functions as the Proton acceptor in the catalytic mechanism. Lys-125 is a binding site for substrate.

The protein belongs to the ribose 5-phosphate isomerase family. As to quaternary structure, homodimer.

It catalyses the reaction aldehydo-D-ribose 5-phosphate = D-ribulose 5-phosphate. The protein operates within carbohydrate degradation; pentose phosphate pathway; D-ribose 5-phosphate from D-ribulose 5-phosphate (non-oxidative stage): step 1/1. Its function is as follows. Catalyzes the reversible conversion of ribose-5-phosphate to ribulose 5-phosphate. This chain is Ribose-5-phosphate isomerase A, found in Stutzerimonas stutzeri (strain A1501) (Pseudomonas stutzeri).